Consider the following 304-residue polypeptide: Putative S-adenosyl-L-methionine-dependent methyltransferase MMAR_1057 (304 aa).

S-adenosyl-L-methionine contacts are provided by residues Asp130 and 159–160 (DL).

Belongs to the UPF0677 family.

In terms of biological role, exhibits S-adenosyl-L-methionine-dependent methyltransferase activity. This chain is Putative S-adenosyl-L-methionine-dependent methyltransferase MMAR_1057, found in Mycobacterium marinum (strain ATCC BAA-535 / M).